Reading from the N-terminus, the 110-residue chain is MEIEKTNRMNALFEFYAALLTDKQMNYIELYYADDYSLAEIAEEFGVSRQAVYDNIKRTEKILEDYEMKLHMYSDYIVRSQILEEIAEKYPKDSFLQEQIATLSSIDNRD.

The protein belongs to the UPF0122 family.

Might take part in the signal recognition particle (SRP) pathway. This is inferred from the conservation of its genetic proximity to ftsY/ffh. May be a regulatory protein. The polypeptide is UPF0122 protein SGO_1122 (Streptococcus gordonii (strain Challis / ATCC 35105 / BCRC 15272 / CH1 / DL1 / V288)).